The sequence spans 132 residues: MAISFDKAFGIHQYALSVRSKRAEVLSSNIANADTPGFKARDINFSQALEEAQHQQGFGLATTSEKHFALQSDAPGLTQYRNPLQPDTGDGNTVDVQQERSEFLRNSLEYQTSLEFMNSKISGLLKALKGEQ.

It belongs to the flagella basal body rod proteins family. As to quaternary structure, the basal body constitutes a major portion of the flagellar organelle and consists of a number of rings mounted on a central rod. In Gram-negative bacteria, at least four rings, L, P, S and M are present, whereas Gram-positive bacteria lack the L and P rings. The rod consists of about 26 subunits of FlgG in the distal portion, and FlgB, FlgC and FlgF build up the proximal portion of the rod with about 6 subunits each. Rod assembly occurs by export via the flagellum-specific pathway of its constituent proteins and by their incorporation into the rod structure in the probable order of FlgB, FlgC, FlgF and FlgG. Another protein, FliE, also assembles onto the stable rod structure.

Its subcellular location is the bacterial flagellum basal body. In terms of biological role, structural component of flagellum, the bacterial motility apparatus. Part of the rod structure of flagellar basal body. The polypeptide is Flagellar basal body rod protein FlgB (Aeromonas hydrophila).